The sequence spans 61 residues: Small ribosomal subunit protein uS14B (61 aa).

Zn(2+)-binding residues include C24, C27, C40, and C43.

It belongs to the universal ribosomal protein uS14 family. Zinc-binding uS14 subfamily. As to quaternary structure, part of the 30S ribosomal subunit. Contacts proteins S3 and S10. It depends on Zn(2+) as a cofactor.

Functionally, binds 16S rRNA, required for the assembly of 30S particles and may also be responsible for determining the conformation of the 16S rRNA at the A site. This chain is Small ribosomal subunit protein uS14B, found in Mycobacteroides abscessus (strain ATCC 19977 / DSM 44196 / CCUG 20993 / CIP 104536 / JCM 13569 / NCTC 13031 / TMC 1543 / L948) (Mycobacterium abscessus).